We begin with the raw amino-acid sequence, 406 residues long: Glutamyl-tRNA reductase (406 aa).

Substrate is bound by residues 51–54, serine 101, 106–108, and glutamine 112; these read TCNR and ESE. Catalysis depends on cysteine 52, which acts as the Nucleophile. 180–185 lines the NADP(+) pocket; that stretch reads GAGSIG.

It belongs to the glutamyl-tRNA reductase family. In terms of assembly, homodimer.

It carries out the reaction (S)-4-amino-5-oxopentanoate + tRNA(Glu) + NADP(+) = L-glutamyl-tRNA(Glu) + NADPH + H(+). The protein operates within porphyrin-containing compound metabolism; protoporphyrin-IX biosynthesis; 5-aminolevulinate from L-glutamyl-tRNA(Glu): step 1/2. Catalyzes the NADPH-dependent reduction of glutamyl-tRNA(Glu) to glutamate 1-semialdehyde (GSA). This is Glutamyl-tRNA reductase from Caldivirga maquilingensis (strain ATCC 700844 / DSM 13496 / JCM 10307 / IC-167).